The following is a 118-amino-acid chain: Putative pterin-4-alpha-carbinolamine dehydratase (118 aa).

The protein belongs to the pterin-4-alpha-carbinolamine dehydratase family.

It carries out the reaction (4aS,6R)-4a-hydroxy-L-erythro-5,6,7,8-tetrahydrobiopterin = (6R)-L-erythro-6,7-dihydrobiopterin + H2O. In Pseudomonas fluorescens (strain SBW25), this protein is Putative pterin-4-alpha-carbinolamine dehydratase.